Consider the following 736-residue polypeptide: 1,4-alpha-glucan branching enzyme GlgB (736 aa).

The Nucleophile role is filled by Asp-415. The Proton donor role is filled by Glu-470.

It belongs to the glycosyl hydrolase 13 family. GlgB subfamily. As to quaternary structure, monomer.

The catalysed reaction is Transfers a segment of a (1-&gt;4)-alpha-D-glucan chain to a primary hydroxy group in a similar glucan chain.. It functions in the pathway glycan biosynthesis; glycogen biosynthesis. Functionally, catalyzes the formation of the alpha-1,6-glucosidic linkages in glycogen by scission of a 1,4-alpha-linked oligosaccharide from growing alpha-1,4-glucan chains and the subsequent attachment of the oligosaccharide to the alpha-1,6 position. This chain is 1,4-alpha-glucan branching enzyme GlgB, found in Burkholderia orbicola (strain AU 1054).